The sequence spans 443 residues: MDNATVYHFVGIKGSGMSALALILHDKGFKVQGSDITQYTFTQRGLEQAGIDVMAFDEANIHEGLTVIAGNSFTDDHPEIKKAREMGLPVYRYHEFLGHLIEGYTSIGVAGAHGKTSTTGLLAHVLSGVAPTSYLIGDGSGKGTPNARFFVYEADEYRRHFLATKPDYAIMTNIDFDHPDYYTGIDDVYSAFETLAKQVKKGIFAWGDDPELRKLKTDVPVYYYGTSDRDDFQARNIKRSTTGSTFDVYHDDEFLGNFEIHLFGEHNVLNSLAVIAVAYFEKVNMDEIKHELADFKGVKRRFTERKLADMTIIDDYAHHPSEIKATLDAARQKYPDKEIIAVFQPHTFSRTIALMDDFAKSLNLADKVFLTNIFSSARETQGAVSSKDLAQKIVKGGEILTVDNMSPLLDFHDAVVVFMGAGDVQKYERAYEELLSHLSLKNN.

111–117 contacts ATP; the sequence is GAHGKTS.

It belongs to the MurCDEF family.

It localises to the cytoplasm. It catalyses the reaction UDP-N-acetyl-alpha-D-muramate + L-alanine + ATP = UDP-N-acetyl-alpha-D-muramoyl-L-alanine + ADP + phosphate + H(+). It participates in cell wall biogenesis; peptidoglycan biosynthesis. Functionally, cell wall formation. The polypeptide is UDP-N-acetylmuramate--L-alanine ligase (Levilactobacillus brevis (strain ATCC 367 / BCRC 12310 / CIP 105137 / JCM 1170 / LMG 11437 / NCIMB 947 / NCTC 947) (Lactobacillus brevis)).